The chain runs to 612 residues: Chaperone protein DnaK (612 aa).

Residue Thr173 is modified to Phosphothreonine; by autocatalysis. Basic and acidic residues predominate over residues 524–544; sequence DDKVSEEDKQKAESAKDELKQ. 2 disordered regions span residues 524 to 560 and 572 to 612; these read DDKVSEEDKQKAESAKDELKQALESGDMEQVKAKKDA and LYEQ…DDKK. The segment covering 574-586 has biased composition (low complexity); it reads EQVQQEAQQASGE. Acidic residues predominate over residues 587–612; sequence QGEESGNQDDDVVDADYSEVDDDDKK.

This sequence belongs to the heat shock protein 70 family.

Acts as a chaperone. The polypeptide is Chaperone protein DnaK (Oceanobacillus iheyensis (strain DSM 14371 / CIP 107618 / JCM 11309 / KCTC 3954 / HTE831)).